Here is a 400-residue protein sequence, read N- to C-terminus: CCA-adding enzyme (400 aa).

2 residues coordinate ATP: G28 and R31. The CTP site is built by G28 and R31. 2 residues coordinate Mg(2+): D41 and D43. 5 residues coordinate ATP: R112, D155, R158, R161, and R164. The CTP site is built by R112, D155, R158, R161, and R164.

The protein belongs to the tRNA nucleotidyltransferase/poly(A) polymerase family. Bacterial CCA-adding enzyme type 3 subfamily. As to quaternary structure, homodimer. Requires Mg(2+) as cofactor.

The enzyme catalyses a tRNA precursor + 2 CTP + ATP = a tRNA with a 3' CCA end + 3 diphosphate. It carries out the reaction a tRNA with a 3' CCA end + 2 CTP + ATP = a tRNA with a 3' CCACCA end + 3 diphosphate. Its function is as follows. Catalyzes the addition and repair of the essential 3'-terminal CCA sequence in tRNAs without using a nucleic acid template. Adds these three nucleotides in the order of C, C, and A to the tRNA nucleotide-73, using CTP and ATP as substrates and producing inorganic pyrophosphate. tRNA 3'-terminal CCA addition is required both for tRNA processing and repair. Also involved in tRNA surveillance by mediating tandem CCA addition to generate a CCACCA at the 3' terminus of unstable tRNAs. While stable tRNAs receive only 3'-terminal CCA, unstable tRNAs are marked with CCACCA and rapidly degraded. The sequence is that of CCA-adding enzyme from Staphylococcus aureus (strain bovine RF122 / ET3-1).